Here is a 249-residue protein sequence, read N- to C-terminus: BPI fold-containing family A member 1 (249 aa).

The first 15 residues, 1–15 (MFQVAGLIVFCGLLA), serve as a signal peptide directing secretion. Residues 81-86 (LLGGLL) form an important for surfactant activity and antibacterial properties region. Asn151 is a glycosylation site (N-linked (GlcNAc...) asparagine). Cys173 and Cys217 form a disulfide bridge.

It belongs to the BPI/LBP/Plunc superfamily. Plunc family. Monomer. Interacts (via N-terminus) with SCNN1B, a subunit of the heterotrimeric epithelial sodium channel (ENaC); this inhibits proteolytic activation of ENaC. Expressed in lung and trachea.

The protein localises to the secreted. Lipid-binding protein which shows high specificity for the surfactant phospholipid dipalmitoylphosphatidylcholine (DPPC). Plays a role in the innate immune responses of the upper airways. Reduces the surface tension in secretions from airway epithelia and inhibits the formation of biofilm by pathogenic Gram-negative bacteria, such as P.aeruginosa and K.pneumoniae. Negatively regulates proteolytic cleavage of SCNN1G, an event that is required for activation of the epithelial sodium channel (ENaC), and thereby contributes to airway surface liquid homeostasis and proper clearance of mucus. Plays a role in the airway inflammatory response after exposure to irritants. May attract macrophages and neutrophils. The chain is BPI fold-containing family A member 1 (BPIFA1) from Sus scrofa (Pig).